Here is a 284-residue protein sequence, read N- to C-terminus: MTIVNLAAYHFVSIDATEQWRPLVTARCNELGLRGTILLAPEGINLFIAGPREATDAFIDYIRHDPLFEGKFATLQFKESLSDSQPFRRMLVRLKREIITMKKPAIKPELGRAPSVDARTLKAWLDRGHDDAGRPVVMLDTRNAFEVDVGTFDGALDYRIDKFSEFPEVIDANRADLEGRTVVSFCTGGIRCEKAAIHMKEIGIDNVYQLEGGILKYFEEVGGAHYHGDCFVFDYRTALNPQLQPTENVTCFACRAVVTPEAQQSPSYVPGKSCPACAQAASAA.

A Rhodanese domain is found at 132–226 (AGRPVVMLDT…YFEEVGGAHY (95 aa)). The active-site Cysteine persulfide intermediate is the cysteine 186.

This sequence belongs to the TrhO family.

It carries out the reaction uridine(34) in tRNA + AH2 + O2 = 5-hydroxyuridine(34) in tRNA + A + H2O. Functionally, catalyzes oxygen-dependent 5-hydroxyuridine (ho5U) modification at position 34 in tRNAs. The protein is tRNA uridine(34) hydroxylase of Burkholderia ambifaria (strain MC40-6).